A 193-amino-acid polypeptide reads, in one-letter code: Putative kinase protein 029R (193 aa).

Position 9 to 17 (9 to 17 (GIIGSGKSS)) interacts with ATP. 3 residues coordinate substrate: Glu-31, Tyr-43, and Gln-54. Glu-78 (proton acceptor) is an active-site residue. Substrate contacts are provided by Arg-79 and Glu-142.

It belongs to the DCK/DGK family.

This Aedes vexans (Inland floodwater mosquito) protein is Putative kinase protein 029R.